Reading from the N-terminus, the 266-residue chain is Basic endochitinase C (266 aa).

Positions Met1–Gly23 are cleaved as a signal peptide. 3 disulfide bridges follow: Cys46–Cys108, Cys120–Cys128, and Cys246–Cys259. The active-site Proton donor is the Glu90.

The protein belongs to the glycosyl hydrolase 19 family. Chitinase class II subfamily. In terms of tissue distribution, localized to the starchy endoderm of the seed May localize to other parts of the seed including the aleurone cells (at protein level).

The catalysed reaction is Random endo-hydrolysis of N-acetyl-beta-D-glucosaminide (1-&gt;4)-beta-linkages in chitin and chitodextrins.. Defense against chitin-containing fungal pathogens. Binds the hyphal tips of fungi and degrades nascent chitin. This chain is Basic endochitinase C, found in Secale cereale (Rye).